Consider the following 203-residue polypeptide: Glycerol-3-phosphate acyltransferase (203 aa).

Helical transmembrane passes span L3–V23, L75–F95, V113–A133, and L156–W176.

This sequence belongs to the PlsY family. As to quaternary structure, probably interacts with PlsX.

Its subcellular location is the cell inner membrane. The catalysed reaction is an acyl phosphate + sn-glycerol 3-phosphate = a 1-acyl-sn-glycero-3-phosphate + phosphate. Its pathway is lipid metabolism; phospholipid metabolism. Functionally, catalyzes the transfer of an acyl group from acyl-phosphate (acyl-PO(4)) to glycerol-3-phosphate (G3P) to form lysophosphatidic acid (LPA). This enzyme utilizes acyl-phosphate as fatty acyl donor, but not acyl-CoA or acyl-ACP. The protein is Glycerol-3-phosphate acyltransferase of Thioalkalivibrio sulfidiphilus (strain HL-EbGR7).